A 258-amino-acid chain; its full sequence is L-aspartate dehydrogenase 1 (258 aa).

NAD(+) is bound by residues Ala-121 and Asn-181. His-211 is an active-site residue.

Belongs to the L-aspartate dehydrogenase family.

It carries out the reaction L-aspartate + NADP(+) + H2O = oxaloacetate + NH4(+) + NADPH + H(+). The enzyme catalyses L-aspartate + NAD(+) + H2O = oxaloacetate + NH4(+) + NADH + H(+). It functions in the pathway cofactor biosynthesis; NAD(+) biosynthesis; iminoaspartate from L-aspartate (dehydrogenase route): step 1/1. Its function is as follows. Specifically catalyzes the NAD or NADP-dependent dehydrogenation of L-aspartate to iminoaspartate. The chain is L-aspartate dehydrogenase 1 from Bordetella parapertussis (strain 12822 / ATCC BAA-587 / NCTC 13253).